A 263-amino-acid polypeptide reads, in one-letter code: Tryptophan synthase alpha chain (263 aa).

Residues Glu-49 and Asp-60 each act as proton acceptor in the active site.

The protein belongs to the TrpA family. Tetramer of two alpha and two beta chains.

It carries out the reaction (1S,2R)-1-C-(indol-3-yl)glycerol 3-phosphate + L-serine = D-glyceraldehyde 3-phosphate + L-tryptophan + H2O. It participates in amino-acid biosynthesis; L-tryptophan biosynthesis; L-tryptophan from chorismate: step 5/5. The alpha subunit is responsible for the aldol cleavage of indoleglycerol phosphate to indole and glyceraldehyde 3-phosphate. The sequence is that of Tryptophan synthase alpha chain from Jannaschia sp. (strain CCS1).